The following is a 335-amino-acid chain: Proline racemase (335 aa).

C91 functions as the Proton acceptor in the catalytic mechanism. C255 functions as the Proton donor in the catalytic mechanism.

It belongs to the proline racemase family. In terms of assembly, homodimer.

It catalyses the reaction L-proline = D-proline. In terms of biological role, catalyzes the reversible interconversion of L- and D-proline. Plays an important role in the regulation of intra- and extracellular amino acid pools, allowing the bacterium to profit from host precursors and enzymatic pathways. Strong B-cell mitogen. The chain is Proline racemase from Clostridioides difficile (strain 630) (Peptoclostridium difficile).